A 327-amino-acid chain; its full sequence is HTH-type transcriptional regulator EbgR (327 aa).

The 57-residue stretch at 1-57 (MATLKDIAIEAGVSLATVSRVLNDDPTLNVKEETKHRILEIAEKLEYKTSSARKLQT) folds into the HTH lacI-type domain. A DNA-binding region (H-T-H motif) is located at residues 4–23 (LKDIAIEAGVSLATVSRVLN).

Functionally, repressor for beta galactosidase alpha and beta subunits (ebgA and ebgC). Binds lactose as an inducer. The chain is HTH-type transcriptional regulator EbgR (ebgR) from Escherichia coli (strain K12).